The following is a 365-amino-acid chain: Peptide chain release factor 2 (365 aa).

N5-methylglutamine is present on Gln251.

It belongs to the prokaryotic/mitochondrial release factor family. Methylated by PrmC. Methylation increases the termination efficiency of RF2.

It is found in the cytoplasm. Peptide chain release factor 2 directs the termination of translation in response to the peptide chain termination codons UGA and UAA. In Campylobacter jejuni subsp. jejuni serotype O:23/36 (strain 81-176), this protein is Peptide chain release factor 2.